Reading from the N-terminus, the 352-residue chain is S-adenosylmethionine:tRNA ribosyltransferase-isomerase (352 aa).

This sequence belongs to the QueA family. As to quaternary structure, monomer.

The protein resides in the cytoplasm. The catalysed reaction is 7-aminomethyl-7-carbaguanosine(34) in tRNA + S-adenosyl-L-methionine = epoxyqueuosine(34) in tRNA + adenine + L-methionine + 2 H(+). The protein operates within tRNA modification; tRNA-queuosine biosynthesis. Functionally, transfers and isomerizes the ribose moiety from AdoMet to the 7-aminomethyl group of 7-deazaguanine (preQ1-tRNA) to give epoxyqueuosine (oQ-tRNA). The polypeptide is S-adenosylmethionine:tRNA ribosyltransferase-isomerase (Vibrio cholerae serotype O1 (strain ATCC 39541 / Classical Ogawa 395 / O395)).